A 652-amino-acid chain; its full sequence is Ethylmalonyl-CoA mutase (652 aa).

The B12-binding domain occupies proline 519 to threonine 647. Residue histidine 532 coordinates adenosylcob(III)alamin.

The protein belongs to the methylmalonyl-CoA mutase family. In terms of assembly, homodimer. Adenosylcob(III)alamin serves as cofactor.

It carries out the reaction (2R)-ethylmalonyl-CoA = (2S)-methylsuccinyl-CoA. In terms of biological role, radical enzyme that catalyzes the transformation of (2R)-ethylmalonyl-CoA to (2S)-methylsuccinyl-CoA. Is involved in the ethylmalonyl-CoA pathway for acetyl-CoA assimilation required for R.sphaeroides growth on acetate as sole carbon source. Is highly specific for its substrate, ethylmalonyl-CoA, and accepts methylmalonyl-CoA only at 0.2% relative activity. The polypeptide is Ethylmalonyl-CoA mutase (Cereibacter sphaeroides (strain ATCC 17023 / DSM 158 / JCM 6121 / CCUG 31486 / LMG 2827 / NBRC 12203 / NCIMB 8253 / ATH 2.4.1.) (Rhodobacter sphaeroides)).